We begin with the raw amino-acid sequence, 1877 residues long: Transmembrane protein 131 (1877 aa).

The N-terminal stretch at 1 to 20 is a signal peptide; that stretch reads MGKRAGGAAAAAAAASTSSA. The Lumenal segment spans residues 21–1115; the sequence is AGLEPAAGRG…AEALPRPNWE (1095 aa). The segment at 107-281 is papD-L domain; it reads RFEPPMLDFH…ETKGVMRASF (175 aa). Residues 1116–1136 traverse the membrane as a helical segment; the sequence is LALYIIISGVMSALFLLVIGT. Residues 1137–1877 lie on the Cytoplasmic side of the membrane; sequence AYLEAQGIWE…WSNSHFPHEN (741 aa). The span at 1197-1227 shows a compositional bias: polar residues; sequence NASSRPGTGSHRQCGTSVHPHSSHGSKNSAD. Disordered regions lie at residues 1197 to 1573, 1590 to 1655, 1679 to 1707, and 1830 to 1852; these read NASS…SSST, LKQR…NPTF, SDFSSSLGISHIPVDSDGSDSSGLWSPVS, and NSAAAHTPSASGPADDLGQTYNP. Low complexity predominate over residues 1233–1258; it reads TRNSSSMSSRTSPQAAASQSTSKTSP. The segment covering 1301-1311 has biased composition (pro residues); that stretch reads QPPPPVPQHQE. S1318 and S1338 each carry phosphoserine. Basic and acidic residues-rich tracts occupy residues 1326-1339 and 1349-1360; these read SHPERASTTRHSSE and AMDKDFDHHDSS. At S1371 the chain carries Phosphoserine. Basic residues predominate over residues 1376-1391; the sequence is SKGKGKSLQQRKAKPP. Over residues 1392-1414 the composition is skewed to basic and acidic residues; that stretch reads KKQEEKEKRGKGKPQEDELKDAL. A compositionally biased stretch (low complexity) spans 1420–1432; it reads SSTTTETSNPDTE. Composition is skewed to polar residues over residues 1507–1523 and 1538–1550; these read TLASGSKSRNPPKTKGT and LPSSQELGNTSSS. Positions 1599 to 1608 are enriched in pro residues; the sequence is PASPSLPTAP. Over residues 1609–1646 the composition is skewed to low complexity; sequence CPFTSRGSYSSVVNSSGSDTKAKQTSSSKSKLTKAASL. Residues 1830–1839 are compositionally biased toward polar residues; that stretch reads NSAAAHTPSA. A phosphoserine mark is found at S1857 and S1865.

It belongs to the TMEM131 family. As to quaternary structure, interacts (via PapD-L domain) with COL1A2 (via C-terminus); the interaction is direct, may occur with other collagen proteins, and is involved in assembly and TRAPPIII ER-to-Golgi transport complex-dependent secretion of collagen. Interacts (via C-terminus) with TRAPPC8 (via C-terminus); the interaction is direct.

It localises to the membrane. Its function is as follows. Collagen binding transmembrane protein involved in collagen secretion by recruiting the ER-to-Golgi transport complex TRAPPIII. May play a role in the immune response to viral infection. This is Transmembrane protein 131 from Mus musculus (Mouse).